We begin with the raw amino-acid sequence, 297 residues long: Bifunctional protein FolD 2 (297 aa).

Residues 177–179 (GKS), isoleucine 202, and isoleucine 243 contribute to the NADP(+) site.

It belongs to the tetrahydrofolate dehydrogenase/cyclohydrolase family. In terms of assembly, homodimer.

It catalyses the reaction (6R)-5,10-methylene-5,6,7,8-tetrahydrofolate + NADP(+) = (6R)-5,10-methenyltetrahydrofolate + NADPH. The enzyme catalyses (6R)-5,10-methenyltetrahydrofolate + H2O = (6R)-10-formyltetrahydrofolate + H(+). Its pathway is one-carbon metabolism; tetrahydrofolate interconversion. In terms of biological role, catalyzes the oxidation of 5,10-methylenetetrahydrofolate to 5,10-methenyltetrahydrofolate and then the hydrolysis of 5,10-methenyltetrahydrofolate to 10-formyltetrahydrofolate. In Rhizorhabdus wittichii (strain DSM 6014 / CCUG 31198 / JCM 15750 / NBRC 105917 / EY 4224 / RW1) (Sphingomonas wittichii), this protein is Bifunctional protein FolD 2.